A 38-amino-acid chain; its full sequence is Large ribosomal subunit protein bL36 (38 aa).

This sequence belongs to the bacterial ribosomal protein bL36 family.

The polypeptide is Large ribosomal subunit protein bL36 (Lactobacillus johnsonii (strain CNCM I-12250 / La1 / NCC 533)).